The sequence spans 416 residues: Heat shock protein DDB_G0280215 (416 aa).

The sHSP domain occupies 37-150; that stretch reads SMDWGWKPRM…SQHISLFGRE (114 aa). The segment at 216–235 is disordered; sequence ETKERERRIRDTKGETEKKK.

The protein belongs to the small heat shock protein (HSP20) family.

The protein is Heat shock protein DDB_G0280215 of Dictyostelium discoideum (Social amoeba).